Consider the following 522-residue polypeptide: BTB/POZ domain-containing protein 16 (522 aa).

In terms of domain architecture, BTB spans 166-222 (INDPAVTRVAFALALKNLYMKEVEMTVDNVLGVLASAHILQFNRLFQKCVNMMMNRL).

This is BTB/POZ domain-containing protein 16 (Btbd16) from Mus musculus (Mouse).